Here is a 495-residue protein sequence, read N- to C-terminus: UDP-N-acetylmuramoyl-L-alanyl-D-glutamate--2,6-diaminopimelate ligase (495 aa).

Residues Leu27, Ser29, and 44–46 each bind UDP-N-acetyl-alpha-D-muramoyl-L-alanyl-D-glutamate; that span reads HQA. Residue 116-122 coordinates ATP; that stretch reads GTNGKTT. Residues Asn157, 158-159, Ser185, Gln191, and Arg193 contribute to the UDP-N-acetyl-alpha-D-muramoyl-L-alanyl-D-glutamate site; that span reads TT. Lys225 carries the N6-carboxylysine modification. Meso-2,6-diaminopimelate contacts are provided by residues Arg390, 414–417, Gly465, and Glu469; that span reads DNPR. The Meso-diaminopimelate recognition motif motif lies at 414–417; it reads DNPR.

Belongs to the MurCDEF family. MurE subfamily. Mg(2+) serves as cofactor. Carboxylation is probably crucial for Mg(2+) binding and, consequently, for the gamma-phosphate positioning of ATP.

The protein resides in the cytoplasm. It carries out the reaction UDP-N-acetyl-alpha-D-muramoyl-L-alanyl-D-glutamate + meso-2,6-diaminopimelate + ATP = UDP-N-acetyl-alpha-D-muramoyl-L-alanyl-gamma-D-glutamyl-meso-2,6-diaminopimelate + ADP + phosphate + H(+). It participates in cell wall biogenesis; peptidoglycan biosynthesis. Its function is as follows. Catalyzes the addition of meso-diaminopimelic acid to the nucleotide precursor UDP-N-acetylmuramoyl-L-alanyl-D-glutamate (UMAG) in the biosynthesis of bacterial cell-wall peptidoglycan. The chain is UDP-N-acetylmuramoyl-L-alanyl-D-glutamate--2,6-diaminopimelate ligase from Salmonella choleraesuis (strain SC-B67).